The following is a 424-amino-acid chain: L-rhamnose isomerase (424 aa).

The Mn(2+) site is built by His-261, Asp-293, and Asp-295.

This sequence belongs to the rhamnose isomerase family. The cofactor is Mn(2+).

It localises to the cytoplasm. It catalyses the reaction L-rhamnopyranose = L-rhamnulose. It participates in carbohydrate degradation; L-rhamnose degradation; glycerone phosphate from L-rhamnose: step 1/3. Functionally, catalyzes the interconversion of L-rhamnose and L-rhamnulose. This is L-rhamnose isomerase from Bacillus subtilis (strain 168).